Here is a 734-residue protein sequence, read N- to C-terminus: Photosystem I P700 chlorophyll a apoprotein A2 (734 aa).

8 helical membrane-spanning segments follow: residues 46-69 (IFAS…FHVA), 135-158 (LYTG…LHLQ), 175-199 (LNHH…HVAI), 273-291 (MAHH…GHMY), 330-353 (LHFQ…QHMY), 369-395 (SALY…IFFI), 417-439 (ALIS…LYVH), and 517-535 (FLVH…LILV). [4Fe-4S] cluster-binding residues include cysteine 559 and cysteine 568. Transmembrane regions (helical) follow at residues 575-596 (AFYL…YWHW) and 643-665 (LSVW…MFLI). Residues histidine 654, methionine 662, and tyrosine 670 each contribute to the chlorophyll a site. Tryptophan 671 contacts phylloquinone. The helical transmembrane segment at 707-727 (LVGLAHFSVGYVFTYAAFVIA) threads the bilayer.

This sequence belongs to the PsaA/PsaB family. As to quaternary structure, the PsaA/B heterodimer binds the P700 chlorophyll special pair and subsequent electron acceptors. PSI consists of a core antenna complex that captures photons, and an electron transfer chain that converts photonic excitation into a charge separation. The eukaryotic PSI reaction center is composed of at least 11 subunits. P700 is a chlorophyll a/chlorophyll a' dimer, A0 is one or more chlorophyll a, A1 is one or both phylloquinones and FX is a shared 4Fe-4S iron-sulfur center. is required as a cofactor.

It localises to the plastid. It is found in the chloroplast thylakoid membrane. It catalyses the reaction reduced [plastocyanin] + hnu + oxidized [2Fe-2S]-[ferredoxin] = oxidized [plastocyanin] + reduced [2Fe-2S]-[ferredoxin]. Functionally, psaA and PsaB bind P700, the primary electron donor of photosystem I (PSI), as well as the electron acceptors A0, A1 and FX. PSI is a plastocyanin/cytochrome c6-ferredoxin oxidoreductase, converting photonic excitation into a charge separation, which transfers an electron from the donor P700 chlorophyll pair to the spectroscopically characterized acceptors A0, A1, FX, FA and FB in turn. Oxidized P700 is reduced on the lumenal side of the thylakoid membrane by plastocyanin or cytochrome c6. The polypeptide is Photosystem I P700 chlorophyll a apoprotein A2 (Nephroselmis olivacea (Green alga)).